A 339-amino-acid chain; its full sequence is Glycerol-3-phosphate dehydrogenase [NAD(P)+] (339 aa).

The NADPH site is built by Ser-15, Tyr-16, His-36, and Lys-110. The sn-glycerol 3-phosphate site is built by Lys-110, Gly-139, and Thr-141. Residue Ala-143 participates in NADPH binding. Sn-glycerol 3-phosphate is bound by residues Lys-195, Asp-248, Ser-258, Arg-259, and Asn-260. Lys-195 acts as the Proton acceptor in catalysis. Arg-259 is a binding site for NADPH. Residues Val-283 and Glu-285 each contribute to the NADPH site.

This sequence belongs to the NAD-dependent glycerol-3-phosphate dehydrogenase family.

The protein localises to the cytoplasm. It catalyses the reaction sn-glycerol 3-phosphate + NAD(+) = dihydroxyacetone phosphate + NADH + H(+). The catalysed reaction is sn-glycerol 3-phosphate + NADP(+) = dihydroxyacetone phosphate + NADPH + H(+). It participates in membrane lipid metabolism; glycerophospholipid metabolism. Its function is as follows. Catalyzes the reduction of the glycolytic intermediate dihydroxyacetone phosphate (DHAP) to sn-glycerol 3-phosphate (G3P), the key precursor for phospholipid synthesis. This chain is Glycerol-3-phosphate dehydrogenase [NAD(P)+], found in Shigella dysenteriae serotype 1 (strain Sd197).